A 390-amino-acid chain; its full sequence is Probable tRNA pseudouridine synthase D 2 (390 aa).

Asp93 (nucleophile) is an active-site residue. A TRUD domain is found at 166-353 (YVLNYYGIQR…YGTRRKMVTP (188 aa)).

It belongs to the pseudouridine synthase TruD family.

The enzyme catalyses uridine(13) in tRNA = pseudouridine(13) in tRNA. Could be responsible for synthesis of pseudouridine from uracil-13 in transfer RNAs. The sequence is that of Probable tRNA pseudouridine synthase D 2 from Methanococcus maripaludis (strain DSM 14266 / JCM 13030 / NBRC 101832 / S2 / LL).